Here is a 256-residue protein sequence, read N- to C-terminus: Eukaryotic translation initiation factor 3 subunit J (256 aa).

The interval 1-67 (MAAAAAGDSD…KEEAEVKPEV (67 aa)) is sufficient for interaction with EIF3B. The segment at 1–106 (MAAAAAGDSD…LEEPEEPKVL (106 aa)) is disordered. Phosphoserine is present on residues serine 9, serine 11, and serine 18. The segment covering 38-57 (EGEDEDEDVKDNWDDDDDEK) has biased composition (acidic residues). A compositionally biased stretch (basic and acidic residues) spans 58–104 (KEEAEVKPEVKISEKKKIAEKIKEKERQQKKRQEEIKKRLEEPEEPK). The stretch at 68–133 (KISEKKKIAE…ESDLELAKET (66 aa)) forms a coiled coil. Lysine 104 is covalently cross-linked (Glycyl lysine isopeptide (Lys-Gly) (interchain with G-Cter in SUMO2)). Threonine 107 carries the phosphothreonine modification. Phosphoserine is present on serine 125. The tract at residues 214-243 (QSKAKKKKKGVVPGGGLKATMKDDLADYGG) is disordered. Residues 241 to 256 (YGGYDGGYAQDYEDFM) are promotes stable association with the 40S ribosome. Tyrosine 252 is modified (phosphotyrosine).

It belongs to the eIF-3 subunit J family. As to quaternary structure, component of the eukaryotic translation initiation factor 3 (eIF-3) complex, which is composed of 13 subunits: EIF3A, EIF3B, EIF3C, EIF3D, EIF3E, EIF3F, EIF3G, EIF3H, EIF3I, EIF3J, EIF3K, EIF3L and EIF3M. The eIF-3 complex appears to include 3 stable modules: module A is composed of EIF3A, EIF3B, EIF3G and EIF3I; module B is composed of EIF3F, EIF3H, and EIF3M; and module C is composed of EIF3C, EIF3D, EIF3E, EIF3K and EIF3L. EIF3C of module C binds EIF3B of module A and EIF3H of module B, thereby linking the three modules. EIF3J is a labile subunit that binds to the eIF-3 complex via EIF3B. The eIF-3 complex interacts with RPS6KB1 under conditions of nutrient depletion. Mitogenic stimulation leads to binding and activation of a complex composed of MTOR and RPTOR, leading to phosphorylation and release of RPS6KB1 and binding of EIF4B to eIF-3. In terms of processing, phosphorylated. Phosphorylation is enhanced upon serum stimulation.

Its subcellular location is the cytoplasm. Functionally, component of the eukaryotic translation initiation factor 3 (eIF-3) complex, which is required for several steps in the initiation of protein synthesis. The eIF-3 complex associates with the 40S ribosome and facilitates the recruitment of eIF-1, eIF-1A, eIF-2:GTP:methionyl-tRNAi and eIF-5 to form the 43S pre-initiation complex (43S PIC). The eIF-3 complex stimulates mRNA recruitment to the 43S PIC and scanning of the mRNA for AUG recognition. The eIF-3 complex is also required for disassembly and recycling of post-termination ribosomal complexes and subsequently prevents premature joining of the 40S and 60S ribosomal subunits prior to initiation. The eIF-3 complex specifically targets and initiates translation of a subset of mRNAs involved in cell proliferation, including cell cycling, differentiation and apoptosis, and uses different modes of RNA stem-loop binding to exert either translational activation or repression. This subunit binds directly within the mRNA entry channel of the 40S ribosome to the aminoacyl (A) site. It may regulate the interaction between the 43S PIC and mRNA. The sequence is that of Eukaryotic translation initiation factor 3 subunit J from Bos taurus (Bovine).